Here is a 453-residue protein sequence, read N- to C-terminus: Homogentisate 1,2-dioxygenase (453 aa).

Positions 1 to 42 (MLEKAEKQRRAGSGQQRAAGYMPGFGNDFETESLPGALPQGQ) are disordered. The Proton acceptor role is filled by His306. The Fe cation site is built by His349 and Glu355. Residues Tyr364 and His385 each coordinate homogentisate. Residue His385 participates in Fe cation binding.

It belongs to the homogentisate dioxygenase family. As to quaternary structure, hexamer; dimer of trimers. Requires Fe cation as cofactor.

It carries out the reaction homogentisate + O2 = 4-maleylacetoacetate + H(+). It participates in amino-acid degradation; L-phenylalanine degradation; acetoacetate and fumarate from L-phenylalanine: step 4/6. Involved in the catabolism of homogentisate (2,5-dihydroxyphenylacetate or 2,5-OH-PhAc), a central intermediate in the degradation of phenylalanine and tyrosine. Catalyzes the oxidative ring cleavage of the aromatic ring of homogentisate to yield maleylacetoacetate. This chain is Homogentisate 1,2-dioxygenase, found in Rhizobium meliloti (strain 1021) (Ensifer meliloti).